The chain runs to 149 residues: Lipoprotein signal peptidase (149 aa).

The next 3 helical transmembrane spans lie at 24 to 44 (SHIA…LTNL), 57 to 77 (KMWF…YLLW), and 81 to 101 (GKWL…GNFI). Active-site residues include Asp111 and Asp127. The helical transmembrane segment at 122–142 (IFNFADSCLTVGVIFILIGVL) threads the bilayer.

The protein belongs to the peptidase A8 family.

Its subcellular location is the cell membrane. It catalyses the reaction Release of signal peptides from bacterial membrane prolipoproteins. Hydrolyzes -Xaa-Yaa-Zaa-|-(S,diacylglyceryl)Cys-, in which Xaa is hydrophobic (preferably Leu), and Yaa (Ala or Ser) and Zaa (Gly or Ala) have small, neutral side chains.. It functions in the pathway protein modification; lipoprotein biosynthesis (signal peptide cleavage). This protein specifically catalyzes the removal of signal peptides from prolipoproteins. In Lactiplantibacillus plantarum (strain ATCC BAA-793 / NCIMB 8826 / WCFS1) (Lactobacillus plantarum), this protein is Lipoprotein signal peptidase.